Reading from the N-terminus, the 471-residue chain is Serine/threonine-protein kinase AtPK2/AtPK19 (471 aa).

Residues 1-21 (MVSSQCSVANKNQTGKPFQKH) are disordered. A Protein kinase domain is found at 140-395 (FEVLKVVGQG…AEEIKKHKWF (256 aa)). ATP contacts are provided by residues 146-154 (VGQGAFGKV) and K169. Residue D263 is the Proton acceptor of the active site. Residues 281 to 307 (DFGLAKEFEENTRSNSMCGTTEYMAPE) are activation loop. S296 is subject to Phosphoserine; by PDPK1. The 71-residue stretch at 396–466 (KAINWKKLEA…VRPPHSFLHR (71 aa)) folds into the AGC-kinase C-terminal domain. Phosphothreonine; by TOR is present on T455.

Belongs to the protein kinase superfamily. AGC Ser/Thr protein kinase family. S6 kinase subfamily. As to quaternary structure, interacts with TAP46. Binds to MRF1. Post-translationally, undergoes serine-specific autophosphorylation. Phosphorylated at Thr-455 by TOR.

It carries out the reaction L-seryl-[protein] + ATP = O-phospho-L-seryl-[protein] + ADP + H(+). The catalysed reaction is L-threonyl-[protein] + ATP = O-phospho-L-threonyl-[protein] + ADP + H(+). Its activity is regulated as follows. Activated by PDK1. In terms of biological role, downstream effector of TOR signaling pathway. May be involved in adaptation of plant to cold or high-salt conditions. Mediates the phosphorylation of MRFs (e.g. MRF1). This is Serine/threonine-protein kinase AtPK2/AtPK19 (ATPK2) from Arabidopsis thaliana (Mouse-ear cress).